Reading from the N-terminus, the 156-residue chain is Probable cyclic pyranopterin monophosphate synthase (156 aa).

Substrate contacts are provided by residues 73 to 75 and 109 to 110; these read LCH and ME. Asp-124 is an active-site residue.

It belongs to the MoaC family. As to quaternary structure, homohexamer; trimer of dimers.

It catalyses the reaction (8S)-3',8-cyclo-7,8-dihydroguanosine 5'-triphosphate = cyclic pyranopterin phosphate + diphosphate. Its pathway is cofactor biosynthesis; molybdopterin biosynthesis. Catalyzes the conversion of (8S)-3',8-cyclo-7,8-dihydroguanosine 5'-triphosphate to cyclic pyranopterin monophosphate (cPMP). The sequence is that of Probable cyclic pyranopterin monophosphate synthase from Pyrococcus furiosus (strain ATCC 43587 / DSM 3638 / JCM 8422 / Vc1).